The following is a 215-amino-acid chain: Cytochrome c biogenesis ATP-binding export protein CcmA (215 aa).

The region spanning 8-215 is the ABC transporter domain; the sequence is LQATALACER…RDLDLGQWSA (208 aa). 40-47 contacts ATP; the sequence is GPNGCGKT.

This sequence belongs to the ABC transporter superfamily. CcmA exporter (TC 3.A.1.107) family. The complex is composed of two ATP-binding proteins (CcmA) and two transmembrane proteins (CcmB).

The protein localises to the cell inner membrane. The enzyme catalyses heme b(in) + ATP + H2O = heme b(out) + ADP + phosphate + H(+). In terms of biological role, part of the ABC transporter complex CcmAB involved in the biogenesis of c-type cytochromes; once thought to export heme, this seems not to be the case, but its exact role is uncertain. Responsible for energy coupling to the transport system. The chain is Cytochrome c biogenesis ATP-binding export protein CcmA from Pseudomonas syringae pv. syringae (strain B728a).